A 471-amino-acid chain; its full sequence is A-type ATP synthase subunit B (471 aa).

The protein belongs to the ATPase alpha/beta chains family. In terms of assembly, has multiple subunits with at least A(3), B(3), C, D, E, F, H, I and proteolipid K(x).

It is found in the cell membrane. Its function is as follows. Component of the A-type ATP synthase that produces ATP from ADP in the presence of a proton gradient across the membrane. The B chain is a regulatory subunit. This chain is A-type ATP synthase subunit B, found in Halobacterium salinarum (strain ATCC 29341 / DSM 671 / R1).